A 147-amino-acid chain; its full sequence is uncharacterized protein (147 aa).

Residues 23–48 (EEVSQPEPNTANDSSTEYKGKSKDDF) form a disordered region. The segment covering 28-37 (PEPNTANDSS) has biased composition (polar residues). Positions 38 to 48 (TEYKGKSKDDF) are enriched in basic and acidic residues. The chain crosses the membrane as a helical span at residues 85 to 105 (LMFCIIACSFICAIQFLFFII).

The protein resides in the membrane. This is an uncharacterized protein from Saccharomyces cerevisiae (strain ATCC 204508 / S288c) (Baker's yeast).